The following is a 294-amino-acid chain: Thymidylate synthase (294 aa).

Residues arginine 31 and 156–157 (RR) each bind dUMP. The active-site Nucleophile is cysteine 176. Residues 196–199 (RSAD), asparagine 207, and 237–239 (HIY) each bind dUMP. Position 199 (aspartate 199) interacts with (6R)-5,10-methylene-5,6,7,8-tetrahydrofolate. Alanine 293 serves as a coordination point for (6R)-5,10-methylene-5,6,7,8-tetrahydrofolate.

Belongs to the thymidylate synthase family. As to quaternary structure, homodimer.

The enzyme catalyses dUMP + (6R)-5,10-methylene-5,6,7,8-tetrahydrofolate = 7,8-dihydrofolate + dTMP. Its pathway is pyrimidine metabolism; dTTP biosynthesis. The chain is Thymidylate synthase (70) from Saimiri sciureus (Common squirrel monkey).